We begin with the raw amino-acid sequence, 197 residues long: ATP-dependent Clp protease proteolytic subunit 2 (197 aa).

The active-site Nucleophile is Ser-97. His-122 is an active-site residue.

The protein belongs to the peptidase S14 family. Fourteen ClpP subunits assemble into 2 heptameric rings which stack back to back to give a disk-like structure with a central cavity, resembling the structure of eukaryotic proteasomes.

The protein resides in the cytoplasm. It catalyses the reaction Hydrolysis of proteins to small peptides in the presence of ATP and magnesium. alpha-casein is the usual test substrate. In the absence of ATP, only oligopeptides shorter than five residues are hydrolyzed (such as succinyl-Leu-Tyr-|-NHMec, and Leu-Tyr-Leu-|-Tyr-Trp, in which cleavage of the -Tyr-|-Leu- and -Tyr-|-Trp bonds also occurs).. Cleaves peptides in various proteins in a process that requires ATP hydrolysis. Has a chymotrypsin-like activity. Plays a major role in the degradation of misfolded proteins. This is ATP-dependent Clp protease proteolytic subunit 2 from Leptospira interrogans serogroup Icterohaemorrhagiae serovar copenhageni (strain Fiocruz L1-130).